Consider the following 349-residue polypeptide: Anthranilate phosphoribosyltransferase (349 aa).

Residues Gly82, 85–86 (GD), 92–95 (NVST), 110–118 (KHGNRGVSS), and Ser122 each bind 5-phospho-alpha-D-ribose 1-diphosphate. Gly82 contacts anthranilate. A Mg(2+)-binding site is contributed by Ser94. Position 113 (Asn113) interacts with anthranilate. Arg168 is a binding site for anthranilate. Mg(2+) contacts are provided by Asp227 and Glu228.

Belongs to the anthranilate phosphoribosyltransferase family. Homodimer. It depends on Mg(2+) as a cofactor.

The enzyme catalyses N-(5-phospho-beta-D-ribosyl)anthranilate + diphosphate = 5-phospho-alpha-D-ribose 1-diphosphate + anthranilate. Its pathway is amino-acid biosynthesis; L-tryptophan biosynthesis; L-tryptophan from chorismate: step 2/5. Functionally, catalyzes the transfer of the phosphoribosyl group of 5-phosphorylribose-1-pyrophosphate (PRPP) to anthranilate to yield N-(5'-phosphoribosyl)-anthranilate (PRA). This Acinetobacter baumannii (strain ATCC 17978 / DSM 105126 / CIP 53.77 / LMG 1025 / NCDC KC755 / 5377) protein is Anthranilate phosphoribosyltransferase.